A 351-amino-acid chain; its full sequence is Divinyl chlorophyll a/b light-harvesting protein PcbC (351 aa).

6 consecutive transmembrane segments (helical) span residues 27-47 (FIAAHAAHAGLMMFWAGAFTL), 64-84 (LICLPHLAGLGIGGVSNGVIT), 89-109 (CTVIAVLHLIFSGVLGAGGLL), 203-223 (VMGGHAFLAFFLIIGGAFHIA), 244-264 (VLSYSLAGVAYCAFVAAFWCA), and 306-326 (LSNVHFYLGFFFLQGHLWHAL).

The protein belongs to the PsbB/PsbC family. IsiA/Pcb subfamily. The antenna complex consists of divinyl chlorophylls (a and b) and divinyl chlorophyll a/b binding proteins and binds more divinyl chlorophyll b than does the antenna complex from high-light-adapted Prochlorococcus. Divinyl chlorophyll a is required as a cofactor. Divinyl chlorophyll b serves as cofactor.

It is found in the cellular thylakoid membrane. Functionally, the antenna complex functions as a light receptor, it captures and delivers excitation energy to photosystems II and I. The Prochlorales pcb genes are not related to higher plant LHCs. In Prochlorococcus marinus (strain SARG / CCMP1375 / SS120), this protein is Divinyl chlorophyll a/b light-harvesting protein PcbC (pcbC).